The following is a 178-amino-acid chain: Large ribosomal subunit protein uL6 (178 aa).

The protein belongs to the universal ribosomal protein uL6 family. As to quaternary structure, part of the 50S ribosomal subunit.

In terms of biological role, this protein binds to the 23S rRNA, and is important in its secondary structure. It is located near the subunit interface in the base of the L7/L12 stalk, and near the tRNA binding site of the peptidyltransferase center. In Francisella tularensis subsp. tularensis (strain WY96-3418), this protein is Large ribosomal subunit protein uL6.